The sequence spans 97 residues: Eotaxin (97 aa).

An N-terminal signal peptide occupies residues 1 to 23 (MQSSTALLFLLLTVTSFTSQVLA). Intrachain disulfides connect Cys32-Cys57 and Cys33-Cys73. O-linked (GalNAc...) threonine glycosylation is present at Thr94.

This sequence belongs to the intercrine beta (chemokine CC) family. Expressed constitutively in the thymus. Expression inducible in the lung (type I alveolar epithelial cells), intestine, heart, spleen, kidney.

Its subcellular location is the secreted. Functionally, in response to the presence of allergens, this protein directly promotes the accumulation of eosinophils (a prominent feature of allergic inflammatory reactions), but not lymphocytes, macrophages or neutrophils. Binds to CCR3. The polypeptide is Eotaxin (Ccl11) (Mus musculus (Mouse)).